A 429-amino-acid chain; its full sequence is tRNA-2-methylthio-N(6)-dimethylallyladenosine synthase (429 aa).

Residues K2–F115 enclose the MTTase N-terminal domain. [4Fe-4S] cluster-binding residues include C11, C46, C78, C147, C151, and C154. One can recognise a Radical SAM core domain in the interval R133 to E365. One can recognise a TRAM domain in the interval K368 to A429.

It belongs to the methylthiotransferase family. MiaB subfamily. Monomer. [4Fe-4S] cluster is required as a cofactor.

The protein localises to the cytoplasm. The catalysed reaction is N(6)-dimethylallyladenosine(37) in tRNA + (sulfur carrier)-SH + AH2 + 2 S-adenosyl-L-methionine = 2-methylsulfanyl-N(6)-dimethylallyladenosine(37) in tRNA + (sulfur carrier)-H + 5'-deoxyadenosine + L-methionine + A + S-adenosyl-L-homocysteine + 2 H(+). Its function is as follows. Catalyzes the methylthiolation of N6-(dimethylallyl)adenosine (i(6)A), leading to the formation of 2-methylthio-N6-(dimethylallyl)adenosine (ms(2)i(6)A) at position 37 in tRNAs that read codons beginning with uridine. The chain is tRNA-2-methylthio-N(6)-dimethylallyladenosine synthase from Campylobacter hominis (strain ATCC BAA-381 / DSM 21671 / CCUG 45161 / LMG 19568 / NCTC 13146 / CH001A).